The primary structure comprises 149 residues: Protein SprT-like (149 aa).

The SprT-like domain maps to 6–147 (LQKLTEDISL…CGKCRGKIKR (142 aa)). Position 67 (histidine 67) interacts with Zn(2+). Glutamate 68 is an active-site residue. Histidine 71 is a Zn(2+) binding site.

The protein belongs to the SprT family. It depends on Zn(2+) as a cofactor.

It localises to the cytoplasm. The sequence is that of Protein SprT-like from Bacillus velezensis (strain DSM 23117 / BGSC 10A6 / LMG 26770 / FZB42) (Bacillus amyloliquefaciens subsp. plantarum).